Consider the following 222-residue polypeptide: MATPQSVFVFAICILMITELILASKSYYDILGVPKSASERQIKKAFHKLAMKYHPDKNKSPDAEAKFREIAEAYETLSDAHRRKEYDTVGHTAFTNGKGQRGSGSPFEQSFNFNFDDLFKDFNLFGQNQNTRSKKHFENHFQTHQDGSNRQRHHFQEFSFGGGLFDDMFEDMEKMFSFSGFDTTNRHTVQTENRFHGSSKHCRTVTQRRGNMVTTYTDCSGQ.

The signal sequence occupies residues 1–23 (MATPQSVFVFAICILMITELILA). The region spanning 26–90 (SYYDILGVPK…HRRKEYDTVG (65 aa)) is the J domain. The segment at 91 to 222 (HTAFTNGKGQ…VTTYTDCSGQ (132 aa)) is divergent targeting domain. S133 carries the post-translational modification Phosphoserine.

In terms of assembly, interacts with HSPA5/BiP; interaction is direct. Interacts with ERN1/IRE1 (via the luminal region). Interacts with DERL1.

Its subcellular location is the endoplasmic reticulum lumen. Co-chaperone for Hsp70 protein HSPA5/BiP that acts as a key repressor of the ERN1/IRE1-mediated unfolded protein response (UPR). J domain-containing co-chaperones stimulate the ATPase activity of Hsp70 proteins and are required for efficient substrate recognition by Hsp70 proteins. In the unstressed endoplasmic reticulum, interacts with the luminal region of ERN1/IRE1 and selectively recruits HSPA5/BiP: HSPA5/BiP disrupts the dimerization of the active ERN1/IRE1 luminal region, thereby inactivating ERN1/IRE1. Also involved in endoplasmic reticulum-associated degradation (ERAD) of misfolded proteins. Required for survival of B-cell progenitors and normal antibody production. The polypeptide is DnaJ homolog subfamily B member 9 (Cricetulus griseus (Chinese hamster)).